Consider the following 298-residue polypeptide: Bifunctional protein FolD (298 aa).

Residues 165-167 (GRS), S190, and I231 contribute to the NADP(+) site.

The protein belongs to the tetrahydrofolate dehydrogenase/cyclohydrolase family. As to quaternary structure, homodimer.

The enzyme catalyses (6R)-5,10-methylene-5,6,7,8-tetrahydrofolate + NADP(+) = (6R)-5,10-methenyltetrahydrofolate + NADPH. The catalysed reaction is (6R)-5,10-methenyltetrahydrofolate + H2O = (6R)-10-formyltetrahydrofolate + H(+). It functions in the pathway one-carbon metabolism; tetrahydrofolate interconversion. In terms of biological role, catalyzes the oxidation of 5,10-methylenetetrahydrofolate to 5,10-methenyltetrahydrofolate and then the hydrolysis of 5,10-methenyltetrahydrofolate to 10-formyltetrahydrofolate. This is Bifunctional protein FolD from Prochlorococcus marinus (strain AS9601).